The primary structure comprises 429 residues: Dihydroorotase (429 aa).

Residues His-59 and His-61 each contribute to the Zn(2+) site. Substrate-binding positions include 61–63 and Asn-93; that span reads HLR. Lys-143, His-171, His-229, and Asp-298 together coordinate Zn(2+). Lys-143 bears the N6-carboxylysine mark. The active site involves Asp-298. Substrate-binding positions include His-302 and 316 to 317; that span reads AG.

The protein belongs to the metallo-dependent hydrolases superfamily. DHOase family. Class I DHOase subfamily. Zn(2+) is required as a cofactor.

It catalyses the reaction (S)-dihydroorotate + H2O = N-carbamoyl-L-aspartate + H(+). It participates in pyrimidine metabolism; UMP biosynthesis via de novo pathway; (S)-dihydroorotate from bicarbonate: step 3/3. Functionally, catalyzes the reversible cyclization of carbamoyl aspartate to dihydroorotate. The sequence is that of Dihydroorotase from Methanosphaera stadtmanae (strain ATCC 43021 / DSM 3091 / JCM 11832 / MCB-3).